The primary structure comprises 86 residues: Small ribosomal subunit protein uS15c (86 aa).

This sequence belongs to the universal ribosomal protein uS15 family. Part of the 30S ribosomal subunit.

The protein localises to the plastid. The chain is Small ribosomal subunit protein uS15c (rps15) from Cuscuta obtusiflora (Peruvian dodder).